A 431-amino-acid polypeptide reads, in one-letter code: MPVLIESIGNLERRLTFSVPEDRLESHVDERLREIARTARINGFRAGKVPAKVIEQRFGEKVRAEVLDSLLRETLDSAIRAHSLRLAGAARIDHANEGRLNFVATFEVVPDFGEIDVSKFSVVRRTARVTDVDIDQMIENLRLQRRTWRVAEHGAQVGHLVALETWSQAGDERLPIEGVEAGSTILGSGVMFEQIERGLEGLSKGDEKVLDVTFPDDWRVTQLAGKAVQVHVKVIEVSEPVLLEVNEEFIKSFGVKSGKLEDFRADIRANLERELKGALVSHLRREVGEQLIAAYAHVEMPPRLVEKEARLMLAKQIEQIRLSGRDPTGIPDDAHIGFMDAACKRVLVGLLVGEIAGRNRLRLDPMRVTETLHLIASTYEEPEEVFEMYRNDPKLMEGVQSLVMEEQVIEWIADRAKKTEQVLSFQEAIQQ.

One can recognise a PPIase FKBP-type domain in the interval 158–243; the sequence is GHLVALETWS…VIEVSEPVLL (86 aa).

It belongs to the FKBP-type PPIase family. Tig subfamily.

The protein resides in the cytoplasm. It carries out the reaction [protein]-peptidylproline (omega=180) = [protein]-peptidylproline (omega=0). Functionally, involved in protein export. Acts as a chaperone by maintaining the newly synthesized protein in an open conformation. Functions as a peptidyl-prolyl cis-trans isomerase. This Xylella fastidiosa (strain 9a5c) protein is Trigger factor (tig).